Here is a 215-residue protein sequence, read N- to C-terminus: uncharacterized protein (215 aa).

This is an uncharacterized protein from Haemophilus influenzae (strain ATCC 51907 / DSM 11121 / KW20 / Rd).